Consider the following 407-residue polypeptide: Lysosomal phospholipase A and acyltransferase (407 aa).

Residues 1–29 (MGCLCLYRSTLLTGGLLFLLMLADPAFPA) form the signal peptide. Asp-41 provides a ligand contact to substrate. An intrachain disulfide couples Cys-60 to Cys-84. Asn-94 carries an N-linked (GlcNAc...) asparagine glycan. The Acyl-ester intermediate role is filled by Ser-193. Ser-193 contacts Zn(2+). Met-194 contacts substrate. The N-linked (GlcNAc...) asparagine glycan is linked to Asn-284. Active-site charge relay system residues include Asp-355 and His-387. Residue His-387 participates in Zn(2+) binding. Residue Asn-393 is glycosylated (N-linked (GlcNAc...) asparagine).

This sequence belongs to the AB hydrolase superfamily. Lipase family. N-glycosylated. Post-translationally, N-glycosylated. N-glycosylation is important for maturation of the enzyme and normal subcellular location. As to expression, detected in brain (at protein level).

The protein resides in the lysosome. It localises to the secreted. It is found in the membrane. It carries out the reaction a 1,2-diacyl-sn-glycero-3-phosphocholine + H2O = a 2-acyl-sn-glycero-3-phosphocholine + a fatty acid + H(+). The catalysed reaction is 1-hexadecanoyl-2-(9Z-octadecenoyl)-sn-glycero-3-phosphocholine + H2O = 2-(9Z-octadecenoyl)-sn-glycero-3-phosphocholine + hexadecanoate + H(+). The enzyme catalyses 1,2-di-(9Z-octadecenoyl)-sn-glycero-3-phosphocholine + H2O = 2-(9Z-octadecenoyl)-sn-glycero-3-phosphocholine + (9Z)-octadecenoate + H(+). It catalyses the reaction 1-hexadecanoyl-2-glutaroyl-sn-glycero-3-phosphocholine + H2O = 2-glutaroyl-sn-glycero-3-phosphocholine + hexadecanoate + H(+). It carries out the reaction 1-hexadecanoyl-2-nonadioyl-sn-glycero-3-phosphocholine + H2O = 2-nonadioyl-sn-glycero-3-phosphocholine + hexadecanoate + H(+). The catalysed reaction is 1-hexadecanoyl-2-(5-oxopentanoyl)-sn-glycero-3-phosphocholine + H2O = 2-(5-oxopentanoyl)-sn-glycero-3-phosphocholine + hexadecanoate + H(+). The enzyme catalyses 1-hexadecanoyl-2-(9-oxononanoyl)-sn-glycero-3-phosphocholine + H2O = 2-(9-oxononanoyl)-sn-glycero-3-phosphocholine + hexadecanoate + H(+). It catalyses the reaction 1,2-dihexadecanoyl-sn-glycero-3-phosphocholine + H2O = 2-hexadecanoyl-sn-glycero-3-phosphocholine + hexadecanoate + H(+). It carries out the reaction a 1,2-diacyl-sn-glycero-3-phosphocholine + H2O = a 1-acyl-sn-glycero-3-phosphocholine + a fatty acid + H(+). The catalysed reaction is 1-hexadecanoyl-2-(9Z-octadecenoyl)-sn-glycero-3-phosphocholine + H2O = 1-hexadecanoyl-sn-glycero-3-phosphocholine + (9Z)-octadecenoate + H(+). The enzyme catalyses 1,2-di-(9Z-octadecenoyl)-sn-glycero-3-phosphocholine + H2O = 1-(9Z-octadecenoyl)-sn-glycero-3-phosphocholine + (9Z)-octadecenoate + H(+). It catalyses the reaction 1,2-dihexadecanoyl-sn-glycero-3-phosphocholine + H2O = 1-hexadecanoyl-sn-glycero-3-phosphocholine + hexadecanoate + H(+). It carries out the reaction a 1-acyl-sn-glycero-3-phosphocholine + H2O = sn-glycerol 3-phosphocholine + a fatty acid + H(+). The catalysed reaction is 1-hexadecanoyl-sn-glycero-3-phosphocholine + H2O = sn-glycerol 3-phosphocholine + hexadecanoate + H(+). The enzyme catalyses N-(acetyl)-sphing-4-enine + a 1,2-diacyl-sn-glycero-3-phosphoethanolamine = 1-O-acyl-N-(acetyl)-sphing-4-enine + a 2-acyl-sn-glycero-3-phosphoethanolamine. It catalyses the reaction 1-hexadecanoyl-2-(9Z-octadecenoyl)-sn-glycero-3-phosphoethanolamine + N-(acetyl)-sphing-4-enine = 2-(9Z-octadecenoyl)-sn-glycero-3-phosphoethanolamine + 1-hexadecanoyl-N-(acetyl)-sphing-4-enine. It carries out the reaction 1-hexadecanoyl-2-(9Z,12Z-octadecadienoyl)-sn-glycero-3-phosphoethanolamine + N-(acetyl)-sphing-4-enine = 2-(9Z,12Z)-octadecadienoyl-sn-glycero-3-phosphoethanolamine + 1-hexadecanoyl-N-(acetyl)-sphing-4-enine. The catalysed reaction is 1-hexadecanoyl-2-(5Z,8Z,11Z,14Z-eicosatetraenoyl)-sn-glycero-3-phosphoethanolamine + N-(acetyl)-sphing-4-enine = 2-(5Z,8Z,11Z,14Z)-eicosatetraenoyl-sn-glycero-3-phosphoethanolamine + 1-hexadecanoyl-N-(acetyl)-sphing-4-enine. The enzyme catalyses N-(acetyl)-sphing-4-enine + a 1,2-diacyl-sn-glycero-3-phosphoethanolamine = 1-O-acyl-N-(acetyl)-sphing-4-enine + a 1-acyl-sn-glycero-3-phosphoethanolamine. It catalyses the reaction 1-hexadecanoyl-2-(9Z-octadecenoyl)-sn-glycero-3-phosphoethanolamine + N-(acetyl)-sphing-4-enine = 1-(9Z-octadecenoyl)-N-(acetyl)-sphing-4-enine + 1-hexadecanoyl-sn-glycero-3-phosphoethanolamine. It carries out the reaction 1-hexadecanoyl-2-(9Z,12Z-octadecadienoyl)-sn-glycero-3-phosphoethanolamine + N-(acetyl)-sphing-4-enine = 1-(9Z,12Z-octadecadienoyl)-N-acetylsphing-4-enine + 1-hexadecanoyl-sn-glycero-3-phosphoethanolamine. The catalysed reaction is 1-hexadecanoyl-2-(5Z,8Z,11Z,14Z-eicosatetraenoyl)-sn-glycero-3-phosphoethanolamine + N-(acetyl)-sphing-4-enine = 1-(5Z,8Z,11Z,14Z)-eicosatetraenoyl-N-(acetyl)-sphing-4-enine + 1-hexadecanoyl-sn-glycero-3-phosphoethanolamine. The enzyme catalyses N-(acetyl)-sphing-4-enine + a 1,2-diacyl-sn-glycero-3-phosphocholine = 1-O-acyl-N-(acetyl)-sphing-4-enine + a 2-acyl-sn-glycero-3-phosphocholine. It catalyses the reaction 1-hexadecanoyl-2-(9Z-octadecenoyl)-sn-glycero-3-phosphocholine + N-(acetyl)-sphing-4-enine = 1-hexadecanoyl-N-(acetyl)-sphing-4-enine + 2-(9Z-octadecenoyl)-sn-glycero-3-phosphocholine. It carries out the reaction 1-hexadecanoyl-2-(9Z,12Z-octadecadienoyl)-sn-glycero-3-phosphocholine + N-(acetyl)-sphing-4-enine = 2-(9Z,12Z-octadecadienoyl)-sn-glycero-3-phosphocholine + 1-hexadecanoyl-N-(acetyl)-sphing-4-enine. The catalysed reaction is 1-hexadecanoyl-2-(5Z,8Z,11Z,14Z-eicosatetraenoyl)-sn-glycero-3-phosphocholine + N-(acetyl)-sphing-4-enine = 1-hexadecanoyl-N-(acetyl)-sphing-4-enine + 2-(5Z,8Z,11Z,14Z)-eicosatetraenoyl-sn-glycero-3-phosphocholine. The enzyme catalyses 1-hexadecanoyl-2-(4Z,7Z,10Z,13Z,16Z,19Z-docosahexaenoyl)-sn-glycero-3-phosphocholine + N-(acetyl)-sphing-4-enine = 2-(4Z,7Z,10Z,13Z,16Z,19Z-docosahexaenoyl)-sn-glycero-3-phosphocholine + 1-hexadecanoyl-N-(acetyl)-sphing-4-enine. It catalyses the reaction 1-hexadecanoyl-2-nonadioyl-sn-glycero-3-phosphocholine + N-(acetyl)-sphing-4-enine = 2-nonadioyl-sn-glycero-3-phosphocholine + 1-hexadecanoyl-N-(acetyl)-sphing-4-enine. It carries out the reaction 1-octadecanoyl-2-(9Z-octadecenoyl)-sn-glycero-3-phosphocholine + N-(acetyl)-sphing-4-enine = 1-octadecanoyl-N-(acetyl)-sphing-4-enine + 2-(9Z-octadecenoyl)-sn-glycero-3-phosphocholine. The catalysed reaction is 1-(9Z)-octadecenoyl-2-octadecanoyl-sn-glycero-3-phosphocholine + N-(acetyl)-sphing-4-enine = 2-octadecanoyl-sn-glycero-3-phosphocholine + 1-(9Z-octadecenoyl)-N-(acetyl)-sphing-4-enine. The enzyme catalyses 1-octadecanoyl-2-(5Z,8Z,11Z,14Z-eicosatetraenoyl)-sn-glycero-3-phosphocholine + N-(acetyl)-sphing-4-enine = 1-octadecanoyl-N-(acetyl)-sphing-4-enine + 2-(5Z,8Z,11Z,14Z)-eicosatetraenoyl-sn-glycero-3-phosphocholine. It catalyses the reaction 1-(9Z-octadecenoyl)-2-hexadecanoyl-sn-glycero-3-phosphocholine + N-(acetyl)-sphing-4-enine = 1-(9Z-octadecenoyl)-N-(acetyl)-sphing-4-enine + 2-hexadecanoyl-sn-glycero-3-phosphocholine. It carries out the reaction N-(acetyl)-sphing-4-enine + a 1,2-diacyl-sn-glycero-3-phosphocholine = 1-O-acyl-N-(acetyl)-sphing-4-enine + a 1-acyl-sn-glycero-3-phosphocholine. The catalysed reaction is 1-hexadecanoyl-2-(9Z-octadecenoyl)-sn-glycero-3-phosphocholine + N-(acetyl)-sphing-4-enine = 1-(9Z-octadecenoyl)-N-(acetyl)-sphing-4-enine + 1-hexadecanoyl-sn-glycero-3-phosphocholine. The enzyme catalyses 1-hexadecanoyl-2-(9Z,12Z-octadecadienoyl)-sn-glycero-3-phosphocholine + N-(acetyl)-sphing-4-enine = 1-(9Z,12Z-octadecadienoyl)-N-acetylsphing-4-enine + 1-hexadecanoyl-sn-glycero-3-phosphocholine. It catalyses the reaction 1-hexadecanoyl-2-(5Z,8Z,11Z,14Z-eicosatetraenoyl)-sn-glycero-3-phosphocholine + N-(acetyl)-sphing-4-enine = 1-(5Z,8Z,11Z,14Z)-eicosatetraenoyl-N-(acetyl)-sphing-4-enine + 1-hexadecanoyl-sn-glycero-3-phosphocholine. It carries out the reaction 1-hexadecanoyl-2-(4Z,7Z,10Z,13Z,16Z,19Z-docosahexaenoyl)-sn-glycero-3-phosphocholine + N-(acetyl)-sphing-4-enine = 1-(4Z,7Z,10Z,13Z,16Z,19Z-docosahexaenoyl)-N-(acetyl)-sphing-4-enine + 1-hexadecanoyl-sn-glycero-3-phosphocholine. The catalysed reaction is 1-octadecanoyl-2-(9Z-octadecenoyl)-sn-glycero-3-phosphocholine + N-(acetyl)-sphing-4-enine = 1-(9Z-octadecenoyl)-N-(acetyl)-sphing-4-enine + 1-octadecanoyl-sn-glycero-3-phosphocholine. The enzyme catalyses 1-octadecanoyl-2-(9Z,12Z)-octadecadienoyl-sn-glycero-3-phosphocholine + N-(acetyl)-sphing-4-enine = 1-(9Z,12Z-octadecadienoyl)-N-acetylsphing-4-enine + 1-octadecanoyl-sn-glycero-3-phosphocholine. It catalyses the reaction 1-(9Z-octadecenoyl)-2-hexadecanoyl-sn-glycero-3-phosphocholine + N-(acetyl)-sphing-4-enine = 1-hexadecanoyl-N-(acetyl)-sphing-4-enine + 1-(9Z-octadecenoyl)-sn-glycero-3-phosphocholine. It carries out the reaction 1-(9Z)-octadecenoyl-2-octadecanoyl-sn-glycero-3-phosphocholine + N-(acetyl)-sphing-4-enine = 1-octadecanoyl-N-(acetyl)-sphing-4-enine + 1-(9Z-octadecenoyl)-sn-glycero-3-phosphocholine. The catalysed reaction is 1,2-di-(9Z-octadecenoyl)-sn-glycero-3-phosphocholine + N-(acetyl)-sphing-4-enine = 1-(9Z-octadecenoyl)-N-(acetyl)-sphing-4-enine + 1-(9Z-octadecenoyl)-sn-glycero-3-phosphocholine. The enzyme catalyses 1-octadecanoyl-2-(5Z,8Z,11Z,14Z-eicosatetraenoyl)-sn-glycero-3-phosphocholine + N-(acetyl)-sphing-4-enine = 1-(5Z,8Z,11Z,14Z)-eicosatetraenoyl-N-(acetyl)-sphing-4-enine + 1-octadecanoyl-sn-glycero-3-phosphocholine. It catalyses the reaction a 1,2-diacyl-sn-glycero-3-phospho-L-serine + N-(acetyl)-sphing-4-enine = a 2-acyl-sn-glycero-3-phospho-L-serine + 1-O-acyl-N-(acetyl)-sphing-4-enine. It carries out the reaction 1-octadecanoyl-2-(9Z-octadecenoyl)-sn-glycero-3-phospho-L-serine + N-(acetyl)-sphing-4-enine = 2-(9Z-octadecenoyl)-sn-glycero-3-phospho-L-serine + 1-octadecanoyl-N-(acetyl)-sphing-4-enine. The catalysed reaction is a 1,2-diacyl-sn-glycero-3-phospho-L-serine + N-(acetyl)-sphing-4-enine = 1-O-acyl-N-(acetyl)-sphing-4-enine + a 1-acyl-sn-glycero-3-phospho-L-serine. The enzyme catalyses 1-octadecanoyl-2-(9Z-octadecenoyl)-sn-glycero-3-phospho-L-serine + N-(acetyl)-sphing-4-enine = 1-octadecanoyl-sn-glycero-3-phosphoserine + 1-(9Z-octadecenoyl)-N-(acetyl)-sphing-4-enine. It catalyses the reaction a 1,2-diacyl-sn-glycero-3-phospho-(1'-sn-glycerol) + N-(acetyl)-sphing-4-enine = 2-acyl-sn-glycero-3-phospho-(1'-sn-glycerol) + 1-O-acyl-N-(acetyl)-sphing-4-enine. It carries out the reaction 1-octadecanoyl-2-(9Z-octadecenoyl)-sn-glycero-3-phospho-(1'-sn-glycerol) + N-(acetyl)-sphing-4-enine = 2-(9Z-octadecenoyl)-sn-glycero-3-phospho-(1'-sn-glycerol) + 1-octadecanoyl-N-(acetyl)-sphing-4-enine. The catalysed reaction is a 1,2-diacyl-sn-glycero-3-phospho-(1'-sn-glycerol) + N-(acetyl)-sphing-4-enine = 1-O-acyl-N-(acetyl)-sphing-4-enine + 1-acyl-sn-glycero-3-phospho-(1'-sn-glycerol). The enzyme catalyses 1-octadecanoyl-2-(9Z-octadecenoyl)-sn-glycero-3-phospho-(1'-sn-glycerol) + N-(acetyl)-sphing-4-enine = 1-octadecanoyl-sn-glycero-3-phospho-(1'-sn-glycerol) + 1-(9Z-octadecenoyl)-N-(acetyl)-sphing-4-enine. It catalyses the reaction an N-acylethanolamine + a 1,2-diacyl-sn-glycero-3-phosphocholine = 2-(acylamino)ethyl fatty acid + a 2-acyl-sn-glycero-3-phosphocholine. It carries out the reaction an N-acylethanolamine + a 1,2-diacyl-sn-glycero-3-phosphocholine = 2-(acylamino)ethyl fatty acid + a 1-acyl-sn-glycero-3-phosphocholine. The catalysed reaction is N-(5Z,8Z,11Z,14Z-eicosatetraenoyl)-ethanolamine + 1,2-di-(9Z-octadecenoyl)-sn-glycero-3-phosphocholine = 2-[(5Z,8Z,11Z,14Z)-eicosatetraenoylamino]ethyl (9Z)-octadecenoate + (9Z-octadecenoyl)-sn-glycero-3-phosphocholine. The enzyme catalyses N-(9Z-octadecenoyl) ethanolamine + 1,2-di-(9Z-octadecenoyl)-sn-glycero-3-phosphocholine = 2-[(9Z)-octadecenoylamino]ethyl (9Z)-octadecenoate + (9Z-octadecenoyl)-sn-glycero-3-phosphocholine. It catalyses the reaction a 3-acyl-sn-glycerol + a 1,2-diacyl-sn-glycero-3-phosphocholine = a 1,3-diacylglycerol + a 1-acyl-sn-glycero-3-phosphocholine. It carries out the reaction a 3-acyl-sn-glycerol + a 1,2-diacyl-sn-glycero-3-phosphocholine = a 1,3-diacylglycerol + a 2-acyl-sn-glycero-3-phosphocholine. The catalysed reaction is 3-(9Z-octadecenoyl)-sn-glycerol + 1,2-di-(9Z-octadecenoyl)-sn-glycero-3-phosphocholine = 1,3-di-(9Z-octadecenoyl)-glycerol + (9Z-octadecenoyl)-sn-glycero-3-phosphocholine. The enzyme catalyses 3-hexadecanoyl-sn-glycerol + 1,2-di-(9Z-octadecenoyl)-sn-glycero-3-phosphocholine = 1-(9Z)-octadecenoyl-3-hexadecanoyl-sn-glycerol + (9Z-octadecenoyl)-sn-glycero-3-phosphocholine. It catalyses the reaction a 1-acyl-sn-glycerol + a 1,2-diacyl-sn-glycero-3-phosphocholine = a 1,3-diacylglycerol + a 2-acyl-sn-glycero-3-phosphocholine. It carries out the reaction a 1-acyl-sn-glycerol + a 1,2-diacyl-sn-glycero-3-phosphocholine = a 1,3-diacylglycerol + a 1-acyl-sn-glycero-3-phosphocholine. The catalysed reaction is 1-(9Z-octadecenoyl)-sn-glycerol + 1,2-di-(9Z-octadecenoyl)-sn-glycero-3-phosphocholine = 1,3-di-(9Z-octadecenoyl)-glycerol + (9Z-octadecenoyl)-sn-glycero-3-phosphocholine. The enzyme catalyses 1-hexadecanoyl-sn-glycerol + 1,2-di-(9Z-octadecenoyl)-sn-glycero-3-phosphocholine = 1-hexadecanoyl-3-(9Z)-octadecenoyl-sn-glycerol + (9Z-octadecenoyl)-sn-glycero-3-phosphocholine. It catalyses the reaction a 2-acylglycerol + a 1,2-diacyl-sn-glycero-3-phosphocholine = a 1,2-diacylglycerol + a 2-acyl-sn-glycero-3-phosphocholine. It carries out the reaction a 2-acylglycerol + a 1,2-diacyl-sn-glycero-3-phosphocholine = a 1,2-diacylglycerol + a 1-acyl-sn-glycero-3-phosphocholine. The catalysed reaction is 2-hexadecanoylglycerol + 1,2-di-(9Z-octadecenoyl)-sn-glycero-3-phosphocholine = 1-(9Z)-octadecenoyl-2-hexadecanoylglycerol + (9Z-octadecenoyl)-sn-glycero-3-phosphocholine. The enzyme catalyses 1-O-alkylglycerol + a 1,2-diacyl-sn-glycero-3-phosphocholine = 1-O-alkyl-3-acylglycerol + a 1-acyl-sn-glycero-3-phosphocholine. It catalyses the reaction 1-O-alkylglycerol + a 1,2-diacyl-sn-glycero-3-phosphocholine = 1-O-alkyl-3-acylglycerol + a 2-acyl-sn-glycero-3-phosphocholine. It carries out the reaction 1-O-hexadecylglycerol + 1,2-di-(9Z-octadecenoyl)-sn-glycero-3-phosphocholine = 1-O-hexadecyl-3-(9Z)-octadecenoylglycerol + (9Z-octadecenoyl)-sn-glycero-3-phosphocholine. The catalysed reaction is 1-O-alkyl-2-acyl-sn-glycerol + a 1,2-diacyl-sn-glycero-3-phosphocholine = 1-O-alkyl-2,3-diacyl-sn-glycerol + a 2-acyl-sn-glycero-3-phosphocholine. The enzyme catalyses 1-O-alkyl-2-acyl-sn-glycerol + a 1,2-diacyl-sn-glycero-3-phosphocholine = 1-O-alkyl-2,3-diacyl-sn-glycerol + a 1-acyl-sn-glycero-3-phosphocholine. It catalyses the reaction 1-O-hexadecyl-2-acetyl-sn-glycerol + 1,2-di-(9Z-octadecenoyl)-sn-glycero-3-phosphocholine = 1-O-hexadecyl-2-acetyl-3-(9Z)-octadecenoyl-sn-glycerol + (9Z-octadecenoyl)-sn-glycero-3-phosphocholine. It carries out the reaction 1-O-hexadecyl-2-O-methyl-sn-glycerol + 1,2-di-(9Z-octadecenoyl)-sn-glycero-3-phosphocholine = 1-O-hexadecyl-2-O-methyl-3-(9Z)-octadecenoyl-sn-glycerol + (9Z-octadecenoyl)-sn-glycero-3-phosphocholine. The catalysed reaction is a 1,2-diacyl-sn-glycero-3-phosphoethanolamine + H2O = a 1-acyl-sn-glycero-3-phosphoethanolamine + a fatty acid + H(+). The enzyme catalyses 1-acyl-2-(5Z,8Z,11Z,14Z)-eicosatetraenoyl-sn-glycero-3-phosphoethanolamine + H2O = a 1-acyl-sn-glycero-3-phosphoethanolamine + (5Z,8Z,11Z,14Z)-eicosatetraenoate + H(+). It catalyses the reaction a 1,2-diacyl-sn-glycero-3-phospho-(1'-sn-glycerol) + H2O = 1-acyl-sn-glycero-3-phospho-(1'-sn-glycerol) + a fatty acid + H(+). It carries out the reaction 1-hexadecanoyl-2-(9Z-octadecenoyl)-sn-glycero-3-phospho-(1'-sn-glycerol) + H2O = 1-hexadecanoyl-sn-glycero-3-phospho-(1'-sn-glycerol) + (9Z)-octadecenoate + H(+). The catalysed reaction is a 1,2-diacyl-sn-glycero-3-phospho-(1'-sn-glycerol) + H2O = 2-acyl-sn-glycero-3-phospho-(1'-sn-glycerol) + a fatty acid + H(+). The enzyme catalyses 1-hexadecanoyl-2-(9Z-octadecenoyl)-sn-glycero-3-phospho-(1'-sn-glycerol) + H2O = 2-(9Z-octadecenoyl)-sn-glycero-3-phospho-(1'-sn-glycerol) + hexadecanoate + H(+). Its activity is regulated as follows. Transacylase activity is completely inhibited by Triton X-100 and partially inhibited by heparin. Moderately activated by Mg(2+) and Ca(2+). In terms of biological role, has dual calcium-independent phospholipase and O-acyltransferase activities with a potential role in glycerophospholipid homeostasis and remodeling of acyl groups of lipophilic alcohols present in acidic cellular compartments. Catalyzes hydrolysis of the ester bond of the fatty acyl group attached at sn-1 or sn-2 position of phospholipids (phospholipase A1 or A2 activity) and transfer it to the hydroxyl group at the first carbon of lipophilic alcohols (O-acyltransferase activity). Among preferred fatty acyl donors are phosphatidylcholines, phosphatidylethanolamines, phosphatidylglycerols and phosphatidylserines. Favors sn-2 over sn-1 deacylation of unsaturated fatty acyl groups of phosphatidylcholines, phosphatidylethanolamines, and phosphatidylglycerols. Among preferred fatty acyl acceptors are natural lipophilic alcohols including short-chain ceramide N-acetyl-sphingosine (C2 ceramide), alkylacylglycerols, monoacylglycerols, and acylethanolamides such as anandamide and oleoylethanolamide. Selectively hydrolyzes the sn-1 fatty acyl group of truncated oxidized phospholipids and may play a role in detoxification of reactive oxidized phospholipids during oxidative stress. Required for normal phospholipid degradation in alveolar macrophages with potential implications in the clearance of pulmonary surfactant, which is mainly composed of dipalmitoylphosphatidylcholine (1,2-dihexadecanoyl-sn-glycero-3-phosphocholine). Involved in the first step of bis(monoacylglycero)phosphate (BMP) de novo synthesis from phosphatidylglycerol (1,2-diacyl-sn-glycero-3-phospho-(1'-sn-glycerol), PG). BMP is an important player in cargo sorting and degradation, regulation of cellular cholesterol levels and intercellular communication. At neutral pH, hydrolyzes the sn-1 fatty acyl group of the lysophosphatidylcholines. The polypeptide is Lysosomal phospholipase A and acyltransferase (PLA2G15) (Bos taurus (Bovine)).